A 562-amino-acid chain; its full sequence is Cell division protein FtsZ (562 aa).

Residues 23–27, 110–112, E141, R145, and D189 each bind GTP; these read GAGGN and GTG. Over residues 404–413 the composition is skewed to low complexity; sequence PAAARPAQQP. Disordered regions lie at residues 404-428 and 462-562; these read PAAARPAQQPMAETFRPDPQLRLDP and ETAQ…RQAN. Positions 418–428 are enriched in basic and acidic residues; it reads FRPDPQLRLDP. Low complexity-rich tracts occupy residues 464–486 and 500–510; these read AQAAPQPQRQPEIQRQQAPQPQR and GLLRRPAAAQP.

It belongs to the FtsZ family. As to quaternary structure, homodimer. Polymerizes to form a dynamic ring structure in a strictly GTP-dependent manner. Interacts directly with several other division proteins. Interacts with FtsZ-like protein (also called FtsZm).

The protein resides in the cytoplasm. Its function is as follows. Essential cell division protein that forms a contractile ring structure (Z ring) at the future cell division site. The regulation of the ring assembly controls the timing and the location of cell division. One of the functions of the FtsZ ring is to recruit other cell division proteins to the septum to produce a new cell wall between the dividing cells. Binds GTP and shows GTPase activity. Mild overexpression impairs cell division, leading to very elongated cells. Isolated protein forms filaments and bundles in the presence of GTP. This Magnetospirillum gryphiswaldense (strain DSM 6361 / JCM 21280 / NBRC 15271 / MSR-1) protein is Cell division protein FtsZ.